A 364-amino-acid polypeptide reads, in one-letter code: ERCC4 domain-containing protein EP364R (364 aa).

One can recognise an ERCC4 domain in the interval 3-102 (FLVADHREHH…QLYFFVEGPA (100 aa)). Positions 319–328 (ASRPATQPAA) are enriched in polar residues. Residues 319 to 352 (ASRPATQPAATQPLHEVSDDATSNASDTSSPIGH) form a disordered region. Positions 338 to 348 (DATSNASDTSS) are enriched in low complexity.

Belongs to the asfivirus EP364R family.

Its function is as follows. Plays a role in the inhibition of type I interferon signaling pathway. Mechanistically, specifically interacts with 2',3'-cGAMP and cleaves it via its phosphodiesterase activity. In turn, prevents 2',3'-cGAMP interaction with host ER-resident STING1 leading to inhibition of downstream signaling pathway and type I interferon production. This is ERCC4 domain-containing protein EP364R from African swine fever virus (strain Badajoz 1971 Vero-adapted) (Ba71V).